Here is a 638-residue protein sequence, read N- to C-terminus: Acetolactate synthase 2, chloroplastic (638 aa).

The N-terminal 39 residues, Met1–Arg39, are a transit peptide targeting the chloroplast. Residues Ser44–Gly67 form a disordered region. Thiamine diphosphate is bound at residue Glu112. A disulfide bridge links Cys132 with Cys278. FAD is bound by residues Arg214, His320–Arg341, and Asp363–Asp382. Residues Gln455–His535 are thiamine pyrophosphate binding. Mg(2+)-binding residues include Asp506 and Asn533.

This sequence belongs to the TPP enzyme family. The cofactor is Mg(2+). Thiamine diphosphate is required as a cofactor.

The protein resides in the plastid. It localises to the chloroplast. It carries out the reaction 2 pyruvate + H(+) = (2S)-2-acetolactate + CO2. The protein operates within amino-acid biosynthesis; L-isoleucine biosynthesis; L-isoleucine from 2-oxobutanoate: step 1/4. It functions in the pathway amino-acid biosynthesis; L-valine biosynthesis; L-valine from pyruvate: step 1/4. This is Acetolactate synthase 2, chloroplastic (ALS2) from Zea mays (Maize).